Here is a 167-residue protein sequence, read N- to C-terminus: Small ribosomal subunit protein uS3m (167 aa).

The transit peptide at 1–35 directs the protein to the mitochondrion; it reads MAWSASVRGLGQRVLACSRELPGAWRTLHTSAVCA.

The protein belongs to the universal ribosomal protein uS3 family. In terms of assembly, component of the mitochondrial ribosome small subunit (28S) which comprises a 12S rRNA and about 30 distinct proteins.

It localises to the mitochondrion. This chain is Small ribosomal subunit protein uS3m (Mrps24), found in Mus musculus (Mouse).